Here is a 306-residue protein sequence, read N- to C-terminus: Cell division protein ZipA (306 aa).

The Periplasmic portion of the chain corresponds to 1-6 (MENLQL). A helical membrane pass occupies residues 7–27 (VLLLIGAIAIIAVLVHGFWSI). Over 28 to 306 (RKQQPKGYKQ…NYIQRIRAQA (279 aa)) the chain is Cytoplasmic.

It belongs to the ZipA family. In terms of assembly, interacts with FtsZ via their C-terminal domains.

The protein resides in the cell inner membrane. Essential cell division protein that stabilizes the FtsZ protofilaments by cross-linking them and that serves as a cytoplasmic membrane anchor for the Z ring. Also required for the recruitment to the septal ring of downstream cell division proteins. In Shewanella halifaxensis (strain HAW-EB4), this protein is Cell division protein ZipA.